Here is a 557-residue protein sequence, read N- to C-terminus: Probable phenylalanine--tRNA ligase beta subunit (557 aa).

The 77-residue stretch at 276 to 352 (MHNRSYVMGL…IAHGFNNFRR (77 aa)) folds into the B5 domain. Mg(2+) contacts are provided by Asp-330, Asp-336, Glu-339, and Asp-340.

It belongs to the phenylalanyl-tRNA synthetase beta subunit family. Type 2 subfamily. In terms of assembly, tetramer of two alpha and two beta subunits. Mg(2+) is required as a cofactor.

The protein localises to the cytoplasm. It carries out the reaction tRNA(Phe) + L-phenylalanine + ATP = L-phenylalanyl-tRNA(Phe) + AMP + diphosphate + H(+). The chain is Probable phenylalanine--tRNA ligase beta subunit from Encephalitozoon cuniculi (strain GB-M1) (Microsporidian parasite).